Reading from the N-terminus, the 122-residue chain is SLLQFNKMIKFETRKSGVPFYAAYGCYCGWGGRRPKDPTDRCCFVHDCCYGKLTKCNTKWDIYSYSLKSGYITCGKGTWCKEQICECDRVAAECLRRSLNTYKNEYMFYPDSRCRGPPEYTC.

7 disulfide bridges follow: C26/C114, C28/C43, C42/C94, C48/C122, C49/C87, C56/C80, and C74/C85. Ca(2+) contacts are provided by Y27, G29, and G31. H46 is an active-site residue. D47 is a binding site for Ca(2+). Residue D88 is part of the active site.

Requires Ca(2+) as cofactor. In terms of tissue distribution, expressed by the venom gland.

The protein localises to the secreted. It carries out the reaction a 1,2-diacyl-sn-glycero-3-phosphocholine + H2O = a 1-acyl-sn-glycero-3-phosphocholine + a fatty acid + H(+). Its activity is regulated as follows. Inhibited by chemical modifications mediated by p-BPB, anhydrous acetic acid and NBSF. Functionally, snake venom phospholipase A2 (PLA2) that has a strong dose-dependent anticoagulant effect. In vivo, intramuscular and intervenal injection causes muscle necrosis. Induces moderate edema in the mouse foot pad. PLA2 catalyzes the calcium-dependent hydrolysis of the 2-acyl groups in 3-sn-phosphoglycerides. The protein is Basic phospholipase A2 10 of Crotalus durissus cumanensis (South American rattlesnake).